A 128-amino-acid polypeptide reads, in one-letter code: Lymphocyte antigen 6D (128 aa).

Positions 1 to 20 (MRTALLLLAALAVATGPALT) are cleaved as a signal peptide. The 88-residue stretch at 21-108 (LRCHVCTSSS…AAPTRTALAH (88 aa)) folds into the UPAR/Ly6 domain. 5 disulfides stabilise this stretch: cysteine 23–cysteine 45, cysteine 26–cysteine 32, cysteine 38–cysteine 63, cysteine 67–cysteine 86, and cysteine 87–cysteine 92. Asparagine 98 is lipidated: GPI-anchor amidated asparagine. Positions 99 to 128 (AAPTRTALAHSALSLGLALSLLAVILAPSL) are cleaved as a propeptide — removed in mature form.

Expressed exclusively at the outer cell surface of transitional epithelia and the keratinocyte of stratified squamous epithelia.

It localises to the cell membrane. Functionally, may act as a specification marker at earliest stage specification of lymphocytes between B- and T-cell development. Marks the earliest stage of B-cell specification. This is Lymphocyte antigen 6D (LY6D) from Homo sapiens (Human).